Reading from the N-terminus, the 261-residue chain is Global transcriptional regulator CodY (261 aa).

The segment at 1–159 (MPNLLEKTRK…ASTVVGIQLL (159 aa)) is GAF domain. The H-T-H motif DNA-binding region spans 207–226 (ASVIADRIGITRSVIVNALR).

The protein belongs to the CodY family.

Its subcellular location is the cytoplasm. Its function is as follows. DNA-binding global transcriptional regulator which is involved in the adaptive response to starvation and acts by directly or indirectly controlling the expression of numerous genes in response to nutrient availability. During rapid exponential growth, CodY is highly active and represses genes whose products allow adaptation to nutrient depletion. This is Global transcriptional regulator CodY from Streptococcus agalactiae serotype Ia (strain ATCC 27591 / A909 / CDC SS700).